Consider the following 509-residue polypeptide: Zinc finger CCCH-type with G patch domain-containing protein (509 aa).

The segment at 155 to 178 (PCNYYLEGECRFDEIRCRYSHGAL) adopts a C3H1-type zinc-finger fold. The disordered stretch occupies residues 254-277 (EDELTSEDSSSSPHDESSDEIDSD). The region spanning 310-356 (TRGIGSKLMEKMGYIHGTGLGSEGRGIVTPVSAQILPQGRSLDACME) is the G-patch domain. The interval 407-430 (LGGGESRHQGDQAAKKAKTNDLQQ) is disordered. Positions 411-420 (ESRHQGDQAA) are enriched in basic and acidic residues.

It is found in the nucleus. Transcription repressor. This Drosophila pseudoobscura pseudoobscura (Fruit fly) protein is Zinc finger CCCH-type with G patch domain-containing protein.